Reading from the N-terminus, the 768-residue chain is UPF0313 protein VV2143 (768 aa).

The region spanning 363–640 is the Radical SAM core domain; it reads AYDMIKTSVN…LHKALLRYHD (278 aa). [4Fe-4S] cluster-binding residues include C377, C381, and C384. The interval 674-768 is disordered; the sequence is DARTPAQRRK…GGRNQPSRAR (95 aa). A compositionally biased stretch (basic residues) spans 679–689; that stretch reads AQRRKSGRHGA. Residues 719–731 show a composition bias toward polar residues; the sequence is GGQSNSAPSRSGS.

Belongs to the UPF0313 family. [4Fe-4S] cluster serves as cofactor.

This chain is UPF0313 protein VV2143, found in Vibrio vulnificus (strain YJ016).